Here is a 944-residue protein sequence, read N- to C-terminus: Trehalose monomycolate exporter MmpL3 (944 aa).

Topologically, residues 1 to 13 are cytoplasmic; sequence MFAWWGRTVYRYR. The helical transmembrane segment at 14-34 threads the bilayer; it reads FIVIGVMVALCLGGGVFGLSL. The Periplasmic portion of the chain corresponds to 35 to 185; it reads GKHVTQSGFY…TIATDQRRME (151 aa). Residue 40–44 participates in a 1,2-diacylglycero-3-phosphoethanolamine binding; sequence QSGFY. The chain crosses the membrane as a helical span at residues 186–206; sequence VLALPLVAVVLFFVFGGVIAA. Residues 207-209 are Cytoplasmic-facing; that stretch reads GLP. The helical transmembrane segment at 210 to 230 threads the bilayer; the sequence is VMVGGLCIAGALGIMRFLAIF. At 231-235 the chain is on the periplasmic side; the sequence is GPVHY. A helical transmembrane segment spans residues 236-256; sequence FAQPVVSLIGLGIAIDYGLFI. Residues 257 to 286 are Cytoplasmic-facing; the sequence is VSRFREEIAEGYDTETAVRRTVITAGRTVT. A helical transmembrane segment spans residues 287–307; sequence FSAVLIVASAIGLLLFPQGFL. Residues 308–314 lie on the Periplasmic side of the membrane; the sequence is KSLTYAT. A helical membrane pass occupies residues 315–335; that stretch reads IASVMLSAILSITVLPACLGI. The Cytoplasmic segment spans residues 336 to 396; sequence LGKHVDALGV…KLVNRVMKRP (61 aa). A helical membrane pass occupies residues 397–417; it reads VLFAAPIVIIMILLIIPVGKL. Residues 418 to 562 lie on the Periplasmic side of the membrane; the sequence is SLGGISEKYL…HGLFAKMPLM (145 aa). The chain crosses the membrane as a helical span at residues 563 to 583; it reads VVILLTTTIVLMFLAFGSVVL. Topologically, residues 584–586 are cytoplasmic; the sequence is PIK. A helical transmembrane segment spans residues 587–607; the sequence is ATLMSALTLGSTMGILTWIFV. The Periplasmic segment spans residues 608 to 616; that stretch reads DGHFSKWLN. A helical transmembrane segment spans residues 617–637; sequence FTPTPLTAPVIGLIIALVFGL. The Cytoplasmic segment spans residues 638–672; the sequence is STDYEVFLVSRMVEARERGMSTQEAIRIGTAATGR. A helical transmembrane segment spans residues 673–693; it reads IITAAALIVAVVAGAFVFSDL. The Periplasmic portion of the chain corresponds to 694 to 698; it reads VMMKY. The chain crosses the membrane as a helical span at residues 699–719; the sequence is LAFGLMAALLLDATVVRMFLV. Topologically, residues 720–944 are cytoplasmic; that stretch reads PSVMKLLGDD…QDLLRREGRL (225 aa). The disordered stretch occupies residues 778 to 944; that stretch reads AAGDPRPPHD…QDLLRREGRL (167 aa). Low complexity predominate over residues 791-828; that stretch reads PLAESPRPARSSPASSPELTPALEATAAPAAPSGASTT. Residues 829–839 show a composition bias toward polar residues; sequence RMQIGSSTEPP. Positions 855–866 are enriched in pro residues; sequence STPPPTPTPPSA.

It belongs to the resistance-nodulation-cell division (RND) (TC 2.A.6) family. MmpL subfamily. As to quaternary structure, monomer. Interacts with TtfA (via N-terminus); active trehalose monomycolate (TMM) biosynthesis is not required for the complex formation.

Its subcellular location is the cell inner membrane. It localises to the cell septum. The protein resides in the cell tip. With respect to regulation, inhibited by the antitubercular drug SQ109. Also inhibited by several other compounds such as the pyrrole derivative BM212, the adamantyl urea derivative AU1235, the benzimidazole C215, indoleamides, tetrahydropyrazolo[1,5-a]pyrimidine-3-carboxamide (THPP) and N-benzyl-6',7'-dihydrospiro[piperidine-4,4'-thieno[3,2-c]pyran] (Spiro) analogs. Inhibitory effects of these compounds, including SQ109, are most likely due to their ability to dissipate the transmembrane electrochemical proton gradient. Functionally, transports trehalose monomycolate (TMM) to the cell wall. Flips TMM across the inner membrane. Membrane potential is not required for this function. Transports probably phosphatidylethanolamine (PE) as well. Binds specifically both TMM and PE, but not trehalose dimycolate (TDM). Also binds diacylglycerol (DAG) and other phospholipids, including phosphatidylglycerol (PG), phosphatidylinositol (PI), and cardiolipin (CDL). Contributes to membrane potential, cell wall composition, antibiotic susceptibility and fitness. Could also be part of a heme-iron acquisition system. Its function is as follows. Is the target of the antitubercular drug SQ109. In Mycobacterium tuberculosis (strain ATCC 25618 / H37Rv), this protein is Trehalose monomycolate exporter MmpL3 (mmpL3).